Consider the following 149-residue polypeptide: UPF0756 membrane protein MS1439 (149 aa).

Transmembrane regions (helical) follow at residues 10–32 (IMLV…ISAL), 56–76 (VGII…KVQL), 82–102 (FLNW…WFAG), and 126–146 (VAFL…LAVI).

This sequence belongs to the UPF0756 family.

The protein localises to the cell membrane. This is UPF0756 membrane protein MS1439 from Mannheimia succiniciproducens (strain KCTC 0769BP / MBEL55E).